Here is a 176-residue protein sequence, read N- to C-terminus: Dynein light chain Tctex-type 5-B (176 aa).

It belongs to the dynein light chain Tctex-type family.

The chain is Dynein light chain Tctex-type 5-B (Dynlt5-b) from Xenopus laevis (African clawed frog).